The primary structure comprises 362 residues: 3-dehydroquinate synthase (362 aa).

NAD(+) is bound by residues 72–77, 106–110, 130–131, lysine 142, and lysine 151; these read SGEQAK, GVVGD, and TT. Glutamate 184, histidine 246, and histidine 263 together coordinate Zn(2+).

This sequence belongs to the sugar phosphate cyclases superfamily. Dehydroquinate synthase family. NAD(+) serves as cofactor. Co(2+) is required as a cofactor. Requires Zn(2+) as cofactor.

The protein resides in the cytoplasm. It catalyses the reaction 7-phospho-2-dehydro-3-deoxy-D-arabino-heptonate = 3-dehydroquinate + phosphate. The protein operates within metabolic intermediate biosynthesis; chorismate biosynthesis; chorismate from D-erythrose 4-phosphate and phosphoenolpyruvate: step 2/7. In terms of biological role, catalyzes the conversion of 3-deoxy-D-arabino-heptulosonate 7-phosphate (DAHP) to dehydroquinate (DHQ). The chain is 3-dehydroquinate synthase from Bacillus subtilis (strain 168).